The primary structure comprises 203 residues: DNA-directed RNA polymerase subunit gamma (203 aa).

4 residues coordinate Zn(2+): Cys-34, Cys-36, Cys-49, and Cys-52.

Belongs to the RNA polymerase beta' chain family. RpoC1 subfamily. In cyanobacteria the RNAP catalytic core is composed of 2 alpha, 1 beta, 1 beta', 1 gamma and 1 omega subunit. When a sigma factor is associated with the core the holoenzyme is formed, which can initiate transcription. Requires Zn(2+) as cofactor.

The enzyme catalyses RNA(n) + a ribonucleoside 5'-triphosphate = RNA(n+1) + diphosphate. In terms of biological role, DNA-dependent RNA polymerase catalyzes the transcription of DNA into RNA using the four ribonucleoside triphosphates as substrates. The protein is DNA-directed RNA polymerase subunit gamma (rpoC1) of Prochloron sp.